The primary structure comprises 1516 residues: MAPAKATNVVRLLLGSTALWLSQLGSGTVAASKSVTAHLAAKWPETPLLLEASEFMAEESNEKFWQFLETVQELAIYKQTESDYSYYNLILKKAGQFLDNLHINLLKFAFSIRAYSPAIQMFQQIAADEPPPDGCNAFVVIHKKHTCKINEIKKLLKKAASRTRPYLFKGDHKFPTNKENLPVVILYAEMGTRTFSAFHKVLSEKAQNEEILYVLRHYIQKPSSRKMYLSGYGVELAIKSTEYKALDDTQVKTVTNTTVEDETETNEVQGFLFGKLKEIYSDLRDNLTAFQKYLIESNKQMMPLKVWELQDLSFQAASQIMSAPVYDSIKLMKDISQNFPIKARSLTRIAVNQHMREEIKENQKDLQVRFKIQPGDARLFINGLRVDMDVYDAFSILDMLKLEGKMMNGLRNLGINGEDMSKFLKLNSHIWEYTYVLDIRHSSIMWINDLENDDLYITWPTSCQKLLKPVFPGSVPSIRRNFHNLVLFIDPAQEYTLDFIKLADVFYSHEVPLRIGFVFILNTDDEVDGANDAGVALWRAFNYIAEEFDISEAFISIVHMYQKVKKDQNILTVDNVKSVLQNTFPHANIWDILGIHSKYDEERKAGASFYKMTGLGPLPQALYNGEPFKHEEMNIKELKMAVLQRMMDASVYLQREVFLGTLNDRTNAIDFLMDRNNVVPRINTLILRTNQQYLNLISTSVTADVEDFSTFFFLDSQDKSAVIAKNMYYLTQDDESIISAVTLWIIADFDKPSGRKLLFNALKHMKTSVHSRLGIIYNPTSKINEENTAISRGILAAFLTQKNMFLRSFLGQLAKEEIATAIYSGDKIKTFLIEGMDKNAFEKKYNTVGVNIFRTHQLFCQDVLKLRPGEMGIVSNGRFLGPLDEDFYAEDFYLLEKITFSNLGEKIKGIVENMGINANNMSDFIMKVDALMSSVPKRASRYDVTFLRENHSVIKTNPQENDMFFNVIAIVDPLTREAQKMAQLLVVLGKIINMKIKLFMNCRGRLSEAPLESFYRFVLEPELMSGANDVSSLGPVAKFLDIPESPLLILNMITPEGWLVETVHSNCDLDNIHLKDTEKTVTAEYELEYLLLEGQCFDKVTEQPPRGLQFTLGTKNKPAVVDTIVMAHHGYFQLKANPGAWILRLHQGKSEDIYQIVGHEGTDSQADLEDIIVVLNSFKSKILKVKVKKETDKIKEDILTDEDEKTKGLWDSIKSFTVSLHKENKKEKDVLNIFSVASGHLYERFLRIMMLSVLRNTKTPVKFWLLKNYLSPTFKEVIPHMAKEYGFRYELVQYRWPRWLRQQTERQRIIWGYKILFLDVLFPLAVDKIIFVDADQIVRHDLKELRDFDLDGAPYGYTPFCDSRREMDGYRFWKTGYWASHLLRRKYHISALYVVDLKKFRRIGAGDRLRSQYQALSQDPNSLSNLDQDLPNNMIYQVAIKSLPQDWLWCETWCDDESKQRAKTIDLCNNPKTKESKLKAAARIVPEWVEYDAEIRQLLDHLENKKQDTILTHDEL.

An N-terminal signal peptide occupies residues 1 to 27 (MAPAKATNVVRLLLGSTALWLSQLGSG). N-linked (GlcNAc...) asparagine glycans are attached at residues Asn256, Asn286, Asn920, and Asn950. The segment at 1220–1516 (LHKENKKEKD…QDTILTHDEL (297 aa)) is glucosyltransferase. Position 1289 is a phosphotyrosine (Tyr1289). A Prevents secretion from ER motif is present at residues 1513–1516 (HDEL).

This sequence belongs to the glycosyltransferase 8 family. As to quaternary structure, interacts with METTL23. Interacts with SELENOF. Ca(2+) serves as cofactor. It depends on Mn(2+) as a cofactor. As to expression, higher levels in kidney, pancreas, heart, and skeletal muscle.

The protein localises to the endoplasmic reticulum lumen. Its subcellular location is the endoplasmic reticulum-Golgi intermediate compartment. It carries out the reaction N(4)-(alpha-D-Man-(1-&gt;2)-alpha-D-Man-(1-&gt;2)-alpha-D-Man-(1-&gt;3)-[alpha-D-Man-(1-&gt;2)-alpha-D-Man-(1-&gt;3)-[alpha-D-Man-(1-&gt;2)-alpha-D-Man-(1-&gt;6)]-alpha-D-Man-(1-&gt;6)]-beta-D-Man-(1-&gt;4)-beta-D-GlcNAc-(1-&gt;4)-beta-D-GlcNAc)-L-asparaginyl-[protein] (N-glucan mannose isomer 9A1,2,3B1,2,3) + UDP-alpha-D-glucose = N(4)-(alpha-D-Glc-(1-&gt;3)-alpha-D-Man-(1-&gt;2)-alpha-D-Man-(1-&gt;2)-alpha-D-Man-(1-&gt;3)-[alpha-D-Man-(1-&gt;2)-alpha-D-Man-(1-&gt;3)-[alpha-D-Man-(1-&gt;2)-alpha-D-Man-(1-&gt;6)]-alpha-D-Man-(1-&gt;6)]-beta-D-Man-(1-&gt;4)-beta-D-GlcNAc-(1-&gt;4)-beta-D-GlcNAc)-L-asparaginyl-[protein] + UDP + H(+). It participates in protein modification; protein glycosylation. Ethylenediaminetetraacetic acid completely abolishes catalytic activity. Catalytic activity is enhanced by complex formation with SELENOF. Its function is as follows. Recognizes glycoproteins with minor folding defects. Reglucosylates single N-glycans near the misfolded part of the protein, thus providing quality control for protein folding in the endoplasmic reticulum. Reglucosylated proteins are recognized by calreticulin for recycling to the endoplasmic reticulum and refolding or degradation. The protein is UDP-glucose:glycoprotein glucosyltransferase 2 (UGGT2) of Homo sapiens (Human).